The chain runs to 580 residues: Probable inositol transporter 3 (580 aa).

The next 12 membrane-spanning stretches (helical) occupy residues 34–54, 69–89, 104–124, 127–147, 161–181, 187–207, 289–309, 316–336, 344–364, 455–475, 493–513, and 524–544; these read GIGGLLFGYNTGVIAGALLYI, EIIVSMTVAGAIVGAAIGGWY, VLFLLGALVMVIAHAPWVIIL, LLVGFGVGMASMTSPLYISEM, GLLITGGQFLSYLINLAFVHT, WMLGVSAIPAIIQFCLMLTLP, FVGINTVMYYSPTILQFAGYA, ALALITSGLNAVGSVVSMMFV, LMIISMFGIITCLVILAAVFN, FGYLAIVFLGLYIIVYAPGMG, LAGGIAAVSNWMSNLVVSETF, and GTFLLFAGSSAVGLFFIWLLV.

It belongs to the major facilitator superfamily. Sugar transporter (TC 2.A.1.1) family.

Its subcellular location is the membrane. In terms of biological role, plasma membrane inositol-proton symporter. This chain is Probable inositol transporter 3 (INT3), found in Arabidopsis thaliana (Mouse-ear cress).